A 284-amino-acid polypeptide reads, in one-letter code: Undecaprenyl-diphosphatase 2 (284 aa).

The next 7 membrane-spanning stretches (helical) occupy residues 6–26 (VIFI…EFIP), 46–66 (FAEM…VVLY), 94–114 (FGMN…LFYD), 119–139 (LFNL…LLVV), 183–203 (IMGG…SFFL), 227–247 (TLWI…IIVM), and 262–282 (FAVY…TNII).

It belongs to the UppP family.

It is found in the cell membrane. The enzyme catalyses di-trans,octa-cis-undecaprenyl diphosphate + H2O = di-trans,octa-cis-undecaprenyl phosphate + phosphate + H(+). Its function is as follows. Catalyzes the dephosphorylation of undecaprenyl diphosphate (UPP). Confers resistance to bacitracin. The polypeptide is Undecaprenyl-diphosphatase 2 (Clostridioides difficile (strain 630) (Peptoclostridium difficile)).